Reading from the N-terminus, the 293-residue chain is uncharacterized protein (293 aa).

The 60-residue stretch at 1-60 (MHITLRQLEVFAEVLKSGSTTQASVMLALSQSAVSAALTDLEGQLGVQLFDRVGKRLVVN) folds into the HTH lysR-type domain. Positions 20 to 39 (TTQASVMLALSQSAVSAALT) form a DNA-binding region, H-T-H motif.

The protein belongs to the LysR transcriptional regulatory family.

This is an uncharacterized protein from Escherichia coli O157:H7.